The primary structure comprises 501 residues: NADH-quinone oxidoreductase subunit N (501 aa).

The next 14 helical transmembrane spans lie at His4–Val24, Phe34–Leu54, Leu80–Gly100, Gly112–Gly132, Leu134–Phe154, Leu167–Met187, Pro207–Phe227, Pro241–Tyr261, Leu278–Ala298, Val314–Leu334, His335–Trp355, Met376–Phe396, Gly409–Phe429, and Pro463–Phe483.

Belongs to the complex I subunit 2 family. NDH-1 is composed of 14 different subunits. Subunits NuoA, H, J, K, L, M, N constitute the membrane sector of the complex.

The protein resides in the cell membrane. The enzyme catalyses a quinone + NADH + 5 H(+)(in) = a quinol + NAD(+) + 4 H(+)(out). NDH-1 shuttles electrons from NADH, via FMN and iron-sulfur (Fe-S) centers, to quinones in the respiratory chain. The immediate electron acceptor for the enzyme in this species is believed to be a menaquinone. Couples the redox reaction to proton translocation (for every two electrons transferred, four hydrogen ions are translocated across the cytoplasmic membrane), and thus conserves the redox energy in a proton gradient. The polypeptide is NADH-quinone oxidoreductase subunit N (Desulforudis audaxviator (strain MP104C)).